Consider the following 357-residue polypeptide: tRNA N6-adenosine threonylcarbamoyltransferase (357 aa).

Residues histidine 113 and histidine 117 each coordinate Fe cation. Substrate contacts are provided by residues 136–140 (LVSGG), aspartate 169, glycine 182, and asparagine 288. Aspartate 316 provides a ligand contact to Fe cation.

Belongs to the KAE1 / TsaD family. Fe(2+) is required as a cofactor.

It is found in the cytoplasm. The enzyme catalyses L-threonylcarbamoyladenylate + adenosine(37) in tRNA = N(6)-L-threonylcarbamoyladenosine(37) in tRNA + AMP + H(+). Functionally, required for the formation of a threonylcarbamoyl group on adenosine at position 37 (t(6)A37) in tRNAs that read codons beginning with adenine. Is involved in the transfer of the threonylcarbamoyl moiety of threonylcarbamoyl-AMP (TC-AMP) to the N6 group of A37, together with TsaE and TsaB. TsaD likely plays a direct catalytic role in this reaction. The polypeptide is tRNA N6-adenosine threonylcarbamoyltransferase (Gemmatimonas aurantiaca (strain DSM 14586 / JCM 11422 / NBRC 100505 / T-27)).